A 237-amino-acid polypeptide reads, in one-letter code: Phosphoribosylaminoimidazole-succinocarboxamide synthase (237 aa).

It belongs to the SAICAR synthetase family.

It catalyses the reaction 5-amino-1-(5-phospho-D-ribosyl)imidazole-4-carboxylate + L-aspartate + ATP = (2S)-2-[5-amino-1-(5-phospho-beta-D-ribosyl)imidazole-4-carboxamido]succinate + ADP + phosphate + 2 H(+). The protein operates within purine metabolism; IMP biosynthesis via de novo pathway; 5-amino-1-(5-phospho-D-ribosyl)imidazole-4-carboxamide from 5-amino-1-(5-phospho-D-ribosyl)imidazole-4-carboxylate: step 1/2. In Marinobacter nauticus (strain ATCC 700491 / DSM 11845 / VT8) (Marinobacter aquaeolei), this protein is Phosphoribosylaminoimidazole-succinocarboxamide synthase.